Here is a 412-residue protein sequence, read N- to C-terminus: BSD domain-containing protein 1 (412 aa).

One can recognise a BSD domain in the interval 145 to 197; that stretch reads WLSTFSLEERKAEISELLVSSPAIRALYTKMVPAAVAHAEFWQRYFYKVFQLE. Over residues 208 to 217 the composition is skewed to basic and acidic residues; sequence QRAEQTDHSE. Disordered regions lie at residues 208–227, 253–272, and 298–412; these read QRAEQTDHSESLGWEEEDEE, VTVADTPESSSPPQAVASLS, and ESVT…ENWE. Composition is skewed to polar residues over residues 259-272 and 298-308; these read PESSSPPQAVASLS and ESVTIRVTQPS. The residue at position 308 (serine 308) is a Phosphoserine. The span at 328–349 shows a compositional bias: basic and acidic residues; that stretch reads PEERPAPREETAREDMAQDLRV. A compositionally biased stretch (polar residues) spans 353–372; sequence NSDSGKSTPSNNGKKGSSTD. Acidic residues-rich tracts occupy residues 373–390 and 400–412; these read VSEDWEKDFDLDMTEEEV and TEELEDEDWENWE.

The polypeptide is BSD domain-containing protein 1 (bsdc1) (Danio rerio (Zebrafish)).